Here is a 95-residue protein sequence, read N- to C-terminus: Neutrophil antibiotic peptide NP-4 (95 aa).

Positions 1 to 19 (MRTLALLAAILLVTLQAQA) are cleaved as a signal peptide. The propeptide occupies 20-62 (ELHSGMADDGVDQQQPRAQDLDVAVYIKQDETSPLEVLGAKAG). Intrachain disulfides connect Cys65/Cys93, Cys67/Cys82, and Cys72/Cys92.

The protein belongs to the alpha-defensin family.

It localises to the secreted. Functionally, microbicidal activity. This Oryctolagus cuniculus (Rabbit) protein is Neutrophil antibiotic peptide NP-4.